The chain runs to 68 residues: Alpha-conotoxin-like Ca1.2 (68 aa).

The first 21 residues, 1–21 (MGMRMMFTVFLLVVLATTVVS), serve as a signal peptide directing secretion. The propeptide occupies 22 to 48 (FTSDRASEGRNAAAKDKASDLVALTVR). Intrachain disulfides connect cysteine 50–cysteine 56 and cysteine 51–cysteine 64. The lacks the Ser-Xaa-Pro motif that is crucial for potent interaction with nAChR stretch occupies residues 52–54 (AIR). The residue at position 63 (tyrosine 63) is a Sulfotyrosine. Cysteine 64 carries the cysteine amide modification. The propeptide occupies 65–68 (GGIY).

It belongs to the conotoxin A superfamily. Expressed by the venom duct.

It is found in the secreted. Its function is as follows. Alpha-conotoxins act on postsynaptic membranes, they bind to the nicotinic acetylcholine receptors (nAChR) and thus inhibit them. Has possibly a distinct nAChR binding mode from other alpha-conotoxins, due to a different three residue motif (lacks the Ser-Xaa-Pro motif). In Conus caracteristicus (Characteristic cone), this protein is Alpha-conotoxin-like Ca1.2.